Reading from the N-terminus, the 175-residue chain is Ribosome maturation factor RimM (175 aa).

A PRC barrel domain is found at 95 to 175 (SEDEFYWREL…RIEVDWDPGF (81 aa)).

This sequence belongs to the RimM family. Binds ribosomal protein uS19.

The protein resides in the cytoplasm. An accessory protein needed during the final step in the assembly of 30S ribosomal subunit, possibly for assembly of the head region. Essential for efficient processing of 16S rRNA. May be needed both before and after RbfA during the maturation of 16S rRNA. It has affinity for free ribosomal 30S subunits but not for 70S ribosomes. The sequence is that of Ribosome maturation factor RimM from Aliivibrio fischeri (strain MJ11) (Vibrio fischeri).